The primary structure comprises 208 residues: Small ribosomal subunit protein uS4 (208 aa).

Residues 96-159 form the S4 RNA-binding domain; the sequence is SRLDNIVYRL…KKNEKVLEAL (64 aa).

This sequence belongs to the universal ribosomal protein uS4 family. Part of the 30S ribosomal subunit. Contacts protein S5. The interaction surface between S4 and S5 is involved in control of translational fidelity.

Functionally, one of the primary rRNA binding proteins, it binds directly to 16S rRNA where it nucleates assembly of the body of the 30S subunit. Its function is as follows. With S5 and S12 plays an important role in translational accuracy. This chain is Small ribosomal subunit protein uS4, found in Mycoplasma capricolum subsp. capricolum (strain California kid / ATCC 27343 / NCTC 10154).